Here is a 468-residue protein sequence, read N- to C-terminus: Protein C-ets-2 (468 aa).

The PNT domain maps to 85–170 (ATFSGFQKEQ…EHLEQMIKEN (86 aa)). Serine 220 and serine 225 each carry phosphoserine. Residues 262 to 290 (VNLLNNNSGKPKDHDSPENGGDSFESSDS) form a disordered region. Residues serine 294, serine 297, and serine 300 each carry the phosphoserine modification. Positions 362-442 (IQLWQFLLEL…SGKRYVYRFV (81 aa)) form a DNA-binding region, ETS.

Belongs to the ETS family. In terms of processing, phosphorylation by CDK10 at Ser-220 and Ser-225 creates a phosphodegron that targets ETS2 for proteasomal degradation.

Its subcellular location is the nucleus. Transcription factor activating transcription. Binds specifically the GGA DNA motif in gene promoters and stimulates transcription of those genes. The sequence is that of Protein C-ets-2 (Ets2) from Mus musculus (Mouse).